A 434-amino-acid polypeptide reads, in one-letter code: Histidinol dehydrogenase (434 aa).

Residues Tyr130, Gln191, and Asn214 each coordinate NAD(+). Positions 237, 259, and 262 each coordinate substrate. Residues Gln259 and His262 each contribute to the Zn(2+) site. Active-site proton acceptor residues include Glu327 and His328. Residues His328, Asp361, Glu415, and His420 each coordinate substrate. Asp361 lines the Zn(2+) pocket. His420 lines the Zn(2+) pocket.

It belongs to the histidinol dehydrogenase family. Requires Zn(2+) as cofactor.

The catalysed reaction is L-histidinol + 2 NAD(+) + H2O = L-histidine + 2 NADH + 3 H(+). The protein operates within amino-acid biosynthesis; L-histidine biosynthesis; L-histidine from 5-phospho-alpha-D-ribose 1-diphosphate: step 9/9. In terms of biological role, catalyzes the sequential NAD-dependent oxidations of L-histidinol to L-histidinaldehyde and then to L-histidine. The sequence is that of Histidinol dehydrogenase from Cereibacter sphaeroides (strain ATCC 17023 / DSM 158 / JCM 6121 / CCUG 31486 / LMG 2827 / NBRC 12203 / NCIMB 8253 / ATH 2.4.1.) (Rhodobacter sphaeroides).